The sequence spans 1719 residues: Cilia- and flagella-associated protein 43 (1719 aa).

The segment at 94 to 120 (VREEGAGGGADKPSGSGAVSGKQQSSG) is disordered. WD repeat units follow at residues 122–165 (SVVL…GRCR), 174–214 (SSTS…EKAV), 226–263 (PAGA…PLQL), 308–345 (TSGA…AAAI), 413–452 (CHVG…LLGR), and 513–552 (LHSA…GRVR). The tract at residues 569-596 (TWPRSDGGSGAASGHAQAGPVSTTSAEG) is disordered. 2 WD repeats span residues 697-736 (AHAR…LAAQ) and 749-788 (ITAG…AVAN). Positions 1022–1045 (RAKQEAARKADEDAAKRSAKDNAG) are disordered. The stretch at 1073–1114 (PKPAWLVALGVEPDAVNPKLITEEQNRELKEWQAKEKSLQEE) is one WD 9 repeat. 3 disordered regions span residues 1220 to 1269 (MPGG…AAAA), 1277 to 1296 (ATAA…GAAG), and 1325 to 1372 (TLNP…AAAA). Gly residues predominate over residues 1221-1233 (PGGGAIGAAGGHQ). A compositionally biased stretch (low complexity) spans 1257–1269 (ASLAHSPSGAAAA). Residues 1344–1358 (SSALHPSHSHASVHG) are compositionally biased toward low complexity. 2 coiled-coil regions span residues 1524–1609 (AAQW…RSAQ) and 1651–1679 (HKKL…RLRT). Residues 1685–1719 (ESGAVAGMPSPPRRLPPDIKLLAGSPSSSSVAGRT) form a disordered region. Residues 1709 to 1719 (SPSSSSVAGRT) show a composition bias toward polar residues.

It belongs to the CFAP43 family.

The protein localises to the cell projection. Its subcellular location is the cilium. It localises to the flagellum. The protein resides in the cytoplasm. It is found in the cytoskeleton. The protein localises to the flagellum axoneme. Functionally, flagellar protein involved in flagellum axoneme organization and function. This Chlamydomonas reinhardtii (Chlamydomonas smithii) protein is Cilia- and flagella-associated protein 43.